The primary structure comprises 80 residues: U-poneritoxin(01)-Om3a (80 aa).

The first 25 residues, 1 to 25 (MKPSGLALAFLVVFMMAIMYNSVQA), serve as a signal peptide directing secretion. A propeptide spanning residues 26-39 (AAIADADAEAEAIA) is cleaved from the precursor.

The protein belongs to the formicidae venom precursor-01 superfamily. In terms of processing, truncated sequences of this peptide have also been found in the venom. It is possible they have been cleaved in the venom. In terms of tissue distribution, expressed by the venom gland.

The protein localises to the secreted. Functionally, cationic amphipathic alpha-helical peptide with antimicrobial activities against E.coli (MIC=3.1 uM), S.aureus (MIC=25 uM), and S.cerevisiae (MIC=50 uM). Also shows histamine-releasing activity (37.5% at 10 uM). Does not show hemolytic activity, even at 50 uM. The chain is U-poneritoxin(01)-Om3a from Odontomachus monticola (Trap-jaw ant).